The following is a 429-amino-acid chain: MANVAVIGAQWGDEGKGKVVDWLASRADVVVRFQGGHNAGHTLVVGDQTYKLSLLPSGLVRGKLGIIGNGVVVDPEALLSEIARVSAQGLAVGPETLRIADNATLILPLHGAIDRAREQARGDSKIGTTGRGIGPAYEDKVARRAIRIADLAEPETLSAKLDELLLHHNTLLAGLGAETFEKQALLDQLLALAPKILPYAEPVWERLDEIKRAGQRILFEGAQAVMLDVDHGTYPFVTSSNTIAATAAGGSGMGPSAVDFVLGIAKAYSTRVGSGPFPTELFDETGELLGDRGHEFGTVTGRRRRCGWFDAVLVRQAVKVGGIQGLALTKLDVLDGLPELKICTGYQINGETFRRLPASPAAQAAAKPVYESMEGWSGSTQGARSWADLPAQAIKYVRRIEELTEVPVTLLSTSPDRDDTILVKDPFEG.

GTP is bound by residues 12–18 (GDEGKGK) and 40–42 (GHT). D13 (proton acceptor) is an active-site residue. Positions 13 and 40 each coordinate Mg(2+). Residues 13 to 16 (DEGK), 38 to 41 (NAGH), T129, R143, Q223, T238, and R302 each bind IMP. Catalysis depends on H41, which acts as the Proton donor. Position 298-304 (298-304 (TVTGRRR)) interacts with substrate. GTP-binding positions include R304, 330-332 (KLD), and 412-414 (STS).

It belongs to the adenylosuccinate synthetase family. Homodimer. The cofactor is Mg(2+).

Its subcellular location is the cytoplasm. The enzyme catalyses IMP + L-aspartate + GTP = N(6)-(1,2-dicarboxyethyl)-AMP + GDP + phosphate + 2 H(+). The protein operates within purine metabolism; AMP biosynthesis via de novo pathway; AMP from IMP: step 1/2. In terms of biological role, plays an important role in the de novo pathway of purine nucleotide biosynthesis. Catalyzes the first committed step in the biosynthesis of AMP from IMP. This chain is Adenylosuccinate synthetase, found in Granulibacter bethesdensis (strain ATCC BAA-1260 / CGDNIH1).